Consider the following 449-residue polypeptide: Adenylosuccinate lyase (449 aa).

N(6)-(1,2-dicarboxyethyl)-AMP contacts are provided by residues 9–10 (RY), 75–77 (KHD), and 102–103 (TS). Catalysis depends on His150, which acts as the Proton donor/acceptor. Gln224 contributes to the N(6)-(1,2-dicarboxyethyl)-AMP binding site. Residue Ser275 is the Proton donor/acceptor of the active site. Residues Ser276, 281 to 283 (KMN), and 320 to 324 (SSERI) each bind N(6)-(1,2-dicarboxyethyl)-AMP.

This sequence belongs to the lyase 1 family. Adenylosuccinate lyase subfamily. As to quaternary structure, homotetramer. Residues from neighboring subunits contribute catalytic and substrate-binding residues to each active site.

It carries out the reaction N(6)-(1,2-dicarboxyethyl)-AMP = fumarate + AMP. It catalyses the reaction (2S)-2-[5-amino-1-(5-phospho-beta-D-ribosyl)imidazole-4-carboxamido]succinate = 5-amino-1-(5-phospho-beta-D-ribosyl)imidazole-4-carboxamide + fumarate. The protein operates within purine metabolism; AMP biosynthesis via de novo pathway; AMP from IMP: step 2/2. It functions in the pathway purine metabolism; IMP biosynthesis via de novo pathway; 5-amino-1-(5-phospho-D-ribosyl)imidazole-4-carboxamide from 5-amino-1-(5-phospho-D-ribosyl)imidazole-4-carboxylate: step 2/2. Its function is as follows. Catalyzes two reactions in de novo purine nucleotide biosynthesis. Catalyzes the breakdown of 5-aminoimidazole- (N-succinylocarboxamide) ribotide (SAICAR or 2-[5-amino-1-(5-phospho-beta-D-ribosyl)imidazole-4-carboxamido]succinate) to 5-aminoimidazole-4-carboxamide ribotide (AICAR or 5-amino-1-(5-phospho-beta-D-ribosyl)imidazole-4-carboxamide) and fumarate, and of adenylosuccinate (ADS or N(6)-(1,2-dicarboxyethyl)-AMP) to adenosine monophosphate (AMP) and fumarate. This chain is Adenylosuccinate lyase (purB), found in Methanothermobacter thermautotrophicus (strain ATCC 29096 / DSM 1053 / JCM 10044 / NBRC 100330 / Delta H) (Methanobacterium thermoautotrophicum).